A 354-amino-acid polypeptide reads, in one-letter code: Rhodopsin (354 aa).

At 1-36 the chain is on the extracellular side; the sequence is MNGTEGPYFYVPMVNTTGIVRSPYEYPQYYLVSPAA. 2 N-linked (GlcNAc...) asparagine glycosylation sites follow: N2 and N15. Residues 37 to 61 traverse the membrane as a helical segment; that stretch reads YACLGAYMFFLILVGFPVNFLTLYV. At 62-73 the chain is on the cytoplasmic side; the sequence is TIEHKKLRTPLN. Residues 74-96 traverse the membrane as a helical segment; sequence YILLNLAVADLFMVFGGFTTTIY. Topologically, residues 97-110 are extracellular; it reads TSMHGYFVLGRLGC. Residues C110 and C187 are joined by a disulfide bond. A helical membrane pass occupies residues 111–133; sequence NLEGYFATLGGEIGLWSLVVLAV. The 'Ionic lock' involved in activated form stabilization motif lies at 134-136; that stretch reads ERW. The Cytoplasmic portion of the chain corresponds to 134–152; it reads ERWLVVCKPISNFRFTENH. Residues 153–173 form a helical membrane-spanning segment; the sequence is AIMGLVFTWIMANACAAPPLL. Residues 174 to 202 are Extracellular-facing; sequence GWSRYIPEGMQCSCGVDYYTRAEGFNNES. The helical transmembrane segment at 203-224 threads the bilayer; that stretch reads FVIYMFICHFCIPLVVVFFCYG. Topologically, residues 225–252 are cytoplasmic; that stretch reads RLLCAVKEAAAAQQESETTQRAEREVTR. A helical transmembrane segment spans residues 253-274; that stretch reads MVVILVIGFLVCWTPYASVAWY. The Extracellular segment spans residues 275-286; the sequence is IFSNQGSEFGPL. A helical transmembrane segment spans residues 287–308; the sequence is FMTIPAFFAKSSSIYNPMIYIC. K296 is modified (N6-(retinylidene)lysine). Residues 309 to 354 lie on the Cytoplasmic side of the membrane; the sequence is MNKQFRHCMITTLCCGKNPFEEEEGASTTASKTEASSVSSSSVSPA. 2 S-palmitoyl cysteine lipidation sites follow: C322 and C323. Residues 333-354 form a disordered region; sequence GASTTASKTEASSVSSSSVSPA. Residues 334–354 are compositionally biased toward low complexity; that stretch reads ASTTASKTEASSVSSSSVSPA.

This sequence belongs to the G-protein coupled receptor 1 family. Opsin subfamily. In terms of processing, phosphorylated on some or all of the serine and threonine residues present in the C-terminal region. Post-translationally, contains one covalently linked retinal chromophore.

It is found in the membrane. The protein resides in the cell projection. It localises to the cilium. Its subcellular location is the photoreceptor outer segment. Its function is as follows. Photoreceptor required for image-forming vision at low light intensity. While most salt water fish species use retinal as chromophore, most freshwater fish use 3-dehydroretinal, or a mixture of retinal and 3-dehydroretinal. Light-induced isomerization of 11-cis to all-trans retinal triggers a conformational change that activates signaling via G-proteins. Subsequent receptor phosphorylation mediates displacement of the bound G-protein alpha subunit by arrestin and terminates signaling. The polypeptide is Rhodopsin (rho) (Gambusia affinis (Western mosquitofish)).